Here is a 209-residue protein sequence, read N- to C-terminus: Transcription factor atf31 (209 aa).

The segment covering 90–103 has biased composition (polar residues); it reads SKSPSIISEASHNS. The disordered stretch occupies residues 90–133; it reads SKSPSIISEASHNSPSRELDDSGDENTSKLTGTKQSMLKARNRQ. The region spanning 121–184 is the bZIP domain; sequence GTKQSMLKAR…IKLRTLVFAH (64 aa). The interval 123 to 161 is basic motif; that stretch reads KQSMLKARNRQAAQKCRIKKKKYLQTLQDQVNYYTSENK. Positions 163–177 are leucine-zipper; that stretch reads LLQSANDLREEIIKL.

This sequence belongs to the bZIP family.

The protein localises to the nucleus. The chain is Transcription factor atf31 (atf31) from Schizosaccharomyces pombe (strain 972 / ATCC 24843) (Fission yeast).